We begin with the raw amino-acid sequence, 327 residues long: GMP reductase (327 aa).

Residue Cys176 is the Thioimidate intermediate of the active site. 205 to 228 (IIADGGIRTHGDIAKSIRFGASMV) serves as a coordination point for NADP(+).

This sequence belongs to the IMPDH/GMPR family. GuaC type 2 subfamily.

It carries out the reaction IMP + NH4(+) + NADP(+) = GMP + NADPH + 2 H(+). Catalyzes the irreversible NADPH-dependent deamination of GMP to IMP. It functions in the conversion of nucleobase, nucleoside and nucleotide derivatives of G to A nucleotides, and in maintaining the intracellular balance of A and G nucleotides. In Streptococcus agalactiae serotype III (strain NEM316), this protein is GMP reductase.